Consider the following 488-residue polypeptide: Zinc finger protein 92 (488 aa).

The KRAB domain occupies 14-85; it reads VSFEDVSVYF…DDGMESAARS (72 aa). C2H2-type zinc fingers lie at residues 141–163, 169–191, 197–219, 225–247, 253–275, and 281–303; these read YLCQ…RIIH, YECS…QRIH, YECG…QVIH, FVCR…TRIH, FECT…QRIH, and YICK…QLIH. Residues 309 to 331 form a C2H2-type 7; degenerate zinc finger; sequence FTCHEYGKAFRGLSGLSQHQRVH. A C2H2-type 8 zinc finger spans residues 337 to 359; sequence YECSECGRAFGRRANLFKHQVVH. The segment at 387–408 is disordered; it reads QQPQEAGEGSSAEPQPIDTNEK. The C2H2-type 9 zinc finger occupies 410–432; sequence QVCERCGQVFENKLLLCRHLRIH. The tract at residues 435 to 488 is disordered; the sequence is EDDKKQKPVISSTSVLEDKSLLSQHLEAQPTEESDSEGSVVFVYAEKPHGPSSP.

It belongs to the krueppel C2H2-type zinc-finger protein family. Highly expressed in pancreatic islets.

It localises to the nucleus. Its function is as follows. KRAB domain-containing zinc-finger protein that represses B1/Alu SINE transposable elements and modulates the transcription of nearby genes in a tissue-specific manner. It regulates glucose homeostasis and lipid metabolism by modulating the expression of the endocrine cell-defining transcription factor, MAFB, in pancreatic islets and, the fat metabolism regulator, ACACB, in adipose tissue and muscle. In Mus musculus (Mouse), this protein is Zinc finger protein 92 (Zfp92).